Consider the following 551-residue polypeptide: Arginine--tRNA ligase (551 aa).

The 'HIGH' region signature appears at alanine 125–histidine 135.

Belongs to the class-I aminoacyl-tRNA synthetase family. Monomer.

It is found in the cytoplasm. The enzyme catalyses tRNA(Arg) + L-arginine + ATP = L-arginyl-tRNA(Arg) + AMP + diphosphate. In Nitratidesulfovibrio vulgaris (strain DP4) (Desulfovibrio vulgaris), this protein is Arginine--tRNA ligase.